A 95-amino-acid chain; its full sequence is FXYD domain-containing ion transport regulator 6 (95 aa).

The first 18 residues, 1–18 (MELVLVFLCSLLAPTVLA), serve as a signal peptide directing secretion. The Extracellular segment spans residues 19–35 (SAAEKEKEMDPFHYDYQ). A helical transmembrane segment spans residues 36–58 (TLRIGGLVFAVVLFSVGILLILS). Over 59 to 95 (RRCKCSFNQKPRAPGDEEAQVENLITANATEPQKAEN) the chain is Cytoplasmic.

Belongs to the FXYD family. Regulatory subunit of the sodium/potassium-transporting ATPase which is composed of a catalytic alpha subunit, a non-catalytic beta subunit and an additional regulatory subunit. The regulatory subunit, a member of the FXYD protein family, modulates the enzymatic activity in a tissue- and isoform-specific way by changing affinities of the Na+/K+-ATPase toward Na(+), K(+) or ATP.

It localises to the cell membrane. Functionally, associates with and regulates the activity of the sodium/potassium-transporting ATPase (NKA) which catalyzes the hydrolysis of ATP coupled with the exchange of Na(+) and K(+) ions across the plasma membrane. Reduces the apparent affinity for intracellular Na(+) with no change in the apparent affinity for extracellular K(+). In addition to modulating NKA kinetics, may also function as a regulator of NKA localization to the plasma membrane. This chain is FXYD domain-containing ion transport regulator 6 (FXYD6), found in Pongo abelii (Sumatran orangutan).